We begin with the raw amino-acid sequence, 82 residues long: MNRLMILVFAAVILALASADEDVDIAKRGVPCLCVSDGPRPRGNNLSGIMWMKTGGYGGNGCPKGWHFCGKSRGFFSDCCKR.

An N-terminal signal peptide occupies residues 1–19 (MNRLMILVFAAVILALASA). Positions 20 to 26 (DEDVDIA) are excised as a propeptide. Intrachain disulfides connect Cys32–Cys79, Cys34–Cys69, and Cys62–Cys80.

This sequence belongs to the sea anemone sodium channel inhibitory toxin family. Type I subfamily.

The protein localises to the secreted. The protein resides in the nematocyst. Its function is as follows. Binds specifically to voltage-gated sodium channels (Nav), thereby delaying their inactivation during signal transduction. Causes death to crabs. The chain is Delta-actitoxin-Aeq2b 1 from Actinia equina (Beadlet anemone).